The primary structure comprises 459 residues: Palmitoyltransferase PFA4 (459 aa).

Over 1 to 9 (MAARNWSRV) the chain is Cytoplasmic. The helical transmembrane segment at 10–30 (WVGGTVILISFIAFSSQIFVI) threads the bilayer. Residues 31-37 (WPWYGRE) are Lumenal-facing. The chain crosses the membrane as a helical span at residues 38–58 (ISLDLLKLLVPLNLAAFMIFW). At 59 to 138 (NYRLCVITSP…GNCVGFYNQG (80 aa)) the chain is on the cytoplasmic side. Positions 95-145 (RYCKNCEHYKPPRAHHCRQCKTCWLKLDHHCPWIGNCVGFYNQGHFIRFLL) constitute a DHHC domain. Catalysis depends on cysteine 125, which acts as the S-palmitoyl cysteine intermediate. A helical membrane pass occupies residues 139-159 (HFIRFLLWVDIGTTFHLIIMV). Residues 160–177 (RRVLYIAEYYHQEPTLAD) are Lumenal-facing. The chain crosses the membrane as a helical span at residues 178 to 198 (VLFLVFNFATCVPVWLCVGMF). Residues 199–459 (SIYHVYLACG…DTEEESGYAH (261 aa)) lie on the Cytoplasmic side of the membrane. Residues 278 to 379 (HTTQYFWPPQ…DYDHYDEGPM (102 aa)) are disordered. A compositionally biased stretch (pro residues) spans 286–299 (PQDPSRLPNPPPIP). The span at 310-322 (NGFNPNLQPTNSL) shows a compositional bias: polar residues. Positions 331–356 (HIDEDEHSHERDQYRHYSSGEERDND) are enriched in basic and acidic residues.

The protein belongs to the DHHC palmitoyltransferase family. PFA4 subfamily.

The protein resides in the endoplasmic reticulum membrane. The catalysed reaction is L-cysteinyl-[protein] + hexadecanoyl-CoA = S-hexadecanoyl-L-cysteinyl-[protein] + CoA. In terms of biological role, mediates the reversible addition of palmitate to target proteins, thereby regulating their membrane association and biological function. This Cryptococcus neoformans var. neoformans serotype D (strain B-3501A) (Filobasidiella neoformans) protein is Palmitoyltransferase PFA4.